A 391-amino-acid chain; its full sequence is Chorismate synthase (391 aa).

Position 48 (R48) interacts with NADP(+). Residues R126–S128, G286, K301–S305, and R328 contribute to the FMN site.

Belongs to the chorismate synthase family. FMNH2 is required as a cofactor.

It carries out the reaction 5-O-(1-carboxyvinyl)-3-phosphoshikimate = chorismate + phosphate. Its pathway is metabolic intermediate biosynthesis; chorismate biosynthesis; chorismate from D-erythrose 4-phosphate and phosphoenolpyruvate: step 7/7. Its function is as follows. Catalyzes the anti-1,4-elimination of the C-3 phosphate and the C-6 proR hydrogen from 5-enolpyruvylshikimate-3-phosphate (EPSP) to yield chorismate, which is the branch point compound that serves as the starting substrate for the three terminal pathways of aromatic amino acid biosynthesis. This reaction introduces a second double bond into the aromatic ring system. The chain is Chorismate synthase from Saccharolobus solfataricus (strain ATCC 35092 / DSM 1617 / JCM 11322 / P2) (Sulfolobus solfataricus).